Consider the following 358-residue polypeptide: tRNA-specific 2-thiouridylase MnmA (358 aa).

ATP is bound by residues 6–13 and methionine 32; that span reads ALSGGVDS. Cysteine 103 (nucleophile) is an active-site residue. Cysteine 103 and cysteine 201 are joined by a disulfide. Glycine 127 serves as a coordination point for ATP. Positions 151-153 are interaction with tRNA; the sequence is KDQ. The Cysteine persulfide intermediate role is filled by cysteine 201.

Belongs to the MnmA/TRMU family.

It localises to the cytoplasm. It carries out the reaction S-sulfanyl-L-cysteinyl-[protein] + uridine(34) in tRNA + AH2 + ATP = 2-thiouridine(34) in tRNA + L-cysteinyl-[protein] + A + AMP + diphosphate + H(+). In terms of biological role, catalyzes the 2-thiolation of uridine at the wobble position (U34) of tRNA, leading to the formation of s(2)U34. This is tRNA-specific 2-thiouridylase MnmA from Thermotoga maritima (strain ATCC 43589 / DSM 3109 / JCM 10099 / NBRC 100826 / MSB8).